The sequence spans 203 residues: Holliday junction branch migration complex subunit RuvA (203 aa).

Residues 1–63 form a domain I region; sequence MIGQLSGKVD…EEHIHLYGFL (63 aa). The tract at residues 64–142 is domain II; that stretch reads TLEEKIFFNL…KISSGSAIIK (79 aa). The interval 143–149 is flexible linker; the sequence is ESLNIKN. Positions 150 to 203 are domain III; it reads ITPVASNEVIKALVNLGFSRFEAQNAVQGIITQNPEISIDELIKTALKNRNSNF.

This sequence belongs to the RuvA family. Homotetramer. Forms an RuvA(8)-RuvB(12)-Holliday junction (HJ) complex. HJ DNA is sandwiched between 2 RuvA tetramers; dsDNA enters through RuvA and exits via RuvB. An RuvB hexamer assembles on each DNA strand where it exits the tetramer. Each RuvB hexamer is contacted by two RuvA subunits (via domain III) on 2 adjacent RuvB subunits; this complex drives branch migration. In the full resolvosome a probable DNA-RuvA(4)-RuvB(12)-RuvC(2) complex forms which resolves the HJ.

The protein resides in the cytoplasm. The RuvA-RuvB-RuvC complex processes Holliday junction (HJ) DNA during genetic recombination and DNA repair, while the RuvA-RuvB complex plays an important role in the rescue of blocked DNA replication forks via replication fork reversal (RFR). RuvA specifically binds to HJ cruciform DNA, conferring on it an open structure. The RuvB hexamer acts as an ATP-dependent pump, pulling dsDNA into and through the RuvAB complex. HJ branch migration allows RuvC to scan DNA until it finds its consensus sequence, where it cleaves and resolves the cruciform DNA. The chain is Holliday junction branch migration complex subunit RuvA from Rickettsia conorii (strain ATCC VR-613 / Malish 7).